A 317-amino-acid chain; its full sequence is Putative 2-hydroxyacid dehydrogenase SERP1888 (317 aa).

Residues 155-156 (EI), 234-236 (AGR), and Asp260 each bind NAD(+). The active site involves Arg236. The active site involves Glu265. His283 acts as the Proton donor in catalysis. Position 283–286 (283–286 (HIGN)) interacts with NAD(+).

It belongs to the D-isomer specific 2-hydroxyacid dehydrogenase family.

In Staphylococcus epidermidis (strain ATCC 35984 / DSM 28319 / BCRC 17069 / CCUG 31568 / BM 3577 / RP62A), this protein is Putative 2-hydroxyacid dehydrogenase SERP1888.